The following is a 473-amino-acid chain: Cell division protein FtsP (473 aa).

Positions 1-27 (MSFSRRQFLQASGLAVCLGSLSSSVRA) form a signal peptide, tat-type signal.

The protein belongs to the FtsP family. Predicted to be exported by the Tat system. The position of the signal peptide cleavage has not been experimentally proven.

The protein resides in the periplasm. Its function is as follows. Cell division protein that is required for growth during stress conditions. May be involved in protecting or stabilizing the divisomal assembly under conditions of stress. The chain is Cell division protein FtsP from Proteus mirabilis (strain HI4320).